The following is a 307-amino-acid chain: Thymidylate synthase (307 aa).

Residues 1–22 are disordered; the sequence is MLVEGSELQSGAQQPRTEAPQH. The segment covering 7 to 16 has biased composition (polar residues); the sequence is ELQSGAQQPR. Arg-44 contributes to the dUMP binding site. A Phosphoserine modification is found at Ser-108. Residues 169–170, 189–190, 209–212, Asn-220, and 250–252 contribute to the dUMP site; these read RR, CH, RSGD, and HIY. Cys-189 serves as the catalytic Nucleophile. Asp-212 lines the (6R)-5,10-methylene-5,6,7,8-tetrahydrofolate pocket. Residues Lys-286 and Lys-302 each participate in a glycyl lysine isopeptide (Lys-Gly) (interchain with G-Cter in SUMO2) cross-link. Ala-306 provides a ligand contact to (6R)-5,10-methylene-5,6,7,8-tetrahydrofolate.

This sequence belongs to the thymidylate synthase family. As to quaternary structure, homodimer.

The protein resides in the nucleus. It is found in the cytoplasm. It localises to the mitochondrion. Its subcellular location is the mitochondrion matrix. The protein localises to the mitochondrion inner membrane. The enzyme catalyses dUMP + (6R)-5,10-methylene-5,6,7,8-tetrahydrofolate = 7,8-dihydrofolate + dTMP. It participates in pyrimidine metabolism; dTTP biosynthesis. Catalyzes the reductive methylation of 2'-deoxyuridine 5'-monophosphate (dUMP) to thymidine 5'-monophosphate (dTMP), using the cosubstrate, 5,10- methylenetetrahydrofolate (CH2H4folate) as a 1-carbon donor and reductant and contributes to the de novo mitochondrial thymidylate biosynthesis pathway. The protein is Thymidylate synthase (Tyms) of Rattus norvegicus (Rat).